Reading from the N-terminus, the 396-residue chain is Na(+)/H(+) antiporter NhaA (396 aa).

The next 11 membrane-spanning stretches (helical) occupy residues 17–37 (FSGL…NTNF), 59–79 (FSLT…EIGI), 97–117 (ILPG…YNFI), 127–147 (GWAI…KILG), 156–176 (IFLL…IAFF), 181–201 (IDQY…SINY), 206–226 (CIYI…LSGI), 260–280 (SLSF…NSGI), 292–312 (LLPF…VFLF), 333–353 (IAGI…ISNL), and 368–388 (FSIL…LYFL).

Belongs to the NhaA Na(+)/H(+) (TC 2.A.33) antiporter family.

The protein resides in the cell membrane. It carries out the reaction Na(+)(in) + 2 H(+)(out) = Na(+)(out) + 2 H(+)(in). Na(+)/H(+) antiporter that extrudes sodium in exchange for external protons. In Wigglesworthia glossinidia brevipalpis, this protein is Na(+)/H(+) antiporter NhaA.